The chain runs to 745 residues: uncharacterized protein (745 aa).

It belongs to the herpesviridae UL87 family.

This is an uncharacterized protein from Connochaetes taurinus (Blue wildebeest).